The following is a 714-amino-acid chain: VIN3-like protein 2 (714 aa).

The PHD-type zinc finger occupies 164–232; sequence RCSCCICRKY…CFYCVSCGKA (69 aa). The Nuclear localization signal motif lies at 239–246; sequence WKKQLTIA. One can recognise a Fibronectin type-III domain in the interval 366–463; that stretch reads GSTKIRFEDV…INVLTRSAEE (98 aa). Over residues 478–498 the composition is skewed to polar residues; it reads LTNCSTLSSNPSSVEAESNND. The disordered stretch occupies residues 478-530; sequence LTNCSTLSSNPSSVEAESNNDYIVPKKPSSKNEDNNSPSVDESAAKRMKRTTD. The interval 602–714 is VIN3-Interacting Domain (VID); it reads SMKDNCNNGD…PSGFCMKLWH (113 aa).

As to quaternary structure, self-interacts. Interacts with VIN3 and VIL1. Component of the plant homeodomain / polycomb repressive complex 2 (PHD-PRC2) large complex during prolonged cold, composed of core PRC2 components (VRN2, EZA1, FIE and MSI1), and three related PHD finger proteins (VIL1, VIL2 and VIN3) that mediates histone H3 trimethylation on 'Lys-27' (H3K27me3).

The protein localises to the nucleus. Maybe involved in both the vernalization and photoperiod pathways by regulating gene expression. Binds preferentially to dimethylated histone H3 'Lys-9' (H3K9me2). Promotes flowering in non-inductive photoperiods (e.g. short days) through the maintenance of the epigenetically repressed state of MAF5 via H3K9me2 and plant homeodomain / polycomb repressive complex 2 (PHD-PRC2)-dependent H3K27me3. The protein is VIN3-like protein 2 (VIL2) of Arabidopsis thaliana (Mouse-ear cress).